The primary structure comprises 398 residues: 1-deoxy-D-xylulose 5-phosphate reductoisomerase (398 aa).

The NADPH site is built by threonine 10, glycine 11, serine 12, isoleucine 13, glycine 36, asparagine 38, and asparagine 124. Lysine 125 contacts 1-deoxy-D-xylulose 5-phosphate. Position 126 (glutamate 126) interacts with NADPH. Aspartate 150 is a Mn(2+) binding site. 4 residues coordinate 1-deoxy-D-xylulose 5-phosphate: serine 151, glutamate 152, serine 176, and histidine 199. Glutamate 152 contributes to the Mn(2+) binding site. Position 205 (glycine 205) interacts with NADPH. 1-deoxy-D-xylulose 5-phosphate contacts are provided by serine 212, asparagine 217, lysine 218, and glutamate 221. Glutamate 221 lines the Mn(2+) pocket.

This sequence belongs to the DXR family. Mg(2+) serves as cofactor. Requires Mn(2+) as cofactor.

It carries out the reaction 2-C-methyl-D-erythritol 4-phosphate + NADP(+) = 1-deoxy-D-xylulose 5-phosphate + NADPH + H(+). Its pathway is isoprenoid biosynthesis; isopentenyl diphosphate biosynthesis via DXP pathway; isopentenyl diphosphate from 1-deoxy-D-xylulose 5-phosphate: step 1/6. Catalyzes the NADPH-dependent rearrangement and reduction of 1-deoxy-D-xylulose-5-phosphate (DXP) to 2-C-methyl-D-erythritol 4-phosphate (MEP). The chain is 1-deoxy-D-xylulose 5-phosphate reductoisomerase from Nostoc punctiforme (strain ATCC 29133 / PCC 73102).